Reading from the N-terminus, the 157-residue chain is Ribosome-binding factor A (157 aa).

Positions 127-157 (QQQFGSEDASVEDEVLGDDVADDADETEGKD) are disordered. The segment covering 135–157 (ASVEDEVLGDDVADDADETEGKD) has biased composition (acidic residues).

The protein belongs to the RbfA family. In terms of assembly, monomer. Binds 30S ribosomal subunits, but not 50S ribosomal subunits or 70S ribosomes.

It is found in the cytoplasm. Functionally, one of several proteins that assist in the late maturation steps of the functional core of the 30S ribosomal subunit. Associates with free 30S ribosomal subunits (but not with 30S subunits that are part of 70S ribosomes or polysomes). Required for efficient processing of 16S rRNA. May interact with the 5'-terminal helix region of 16S rRNA. The protein is Ribosome-binding factor A of Shewanella baltica (strain OS155 / ATCC BAA-1091).